The following is a 487-amino-acid chain: Keratin, type I cytoskeletal 12 (487 aa).

The tract at residues 1–118 (MSLSVCTSAL…GNDGGLLSGS (118 aa)) is head. Residues 119 to 154 (EKETMQNLNDRLASYLGKVRSLEEANAELENKIREW) form a coil 1A region. An IF rod domain is found at 119–433 (EKETMQNLND…RLLEGDSQGD (315 aa)). The interval 158–175 (RRTRDAGSQSDYSKYYPL) is linker 1. Positions 176 to 267 (IEDLKNKIVS…KNHEEELQSF (92 aa)) are coil 1B. Residues 268 to 290 (QAGGPGEVNVEMDAAPGVDLTKV) form a linker 12 region. The segment at 291–428 (LNEMRAQYEA…IETYRRLLEG (138 aa)) is coil 2. A disordered region spans residues 428-461 (GDSQGDGFDESSSLSVSKPQTPSVDSSKDPNKTR). A tail region spans residues 429–487 (DSQGDGFDESSSLSVSKPQTPSVDSSKDPNKTRKIKTVVQEIVNGEVVSSQVQELEEEM). A compositionally biased stretch (polar residues) spans 437–452 (ESSSLSVSKPQTPSVD).

Belongs to the intermediate filament family. In terms of assembly, heterotetramer of two type I and two type II keratins. Keratin-3 associates with keratin-12. As to expression, expressed in the corneal epithelium (at protein level). Also expressed in the suprabasal limbal epithelium of the cornea (at protein level).

Functionally, involved in corneal epithelium organization, integrity and corneal keratin expression. The sequence is that of Keratin, type I cytoskeletal 12 (Krt12) from Mus musculus (Mouse).